A 545-amino-acid chain; its full sequence is Eukaryotic translation initiation factor 3 subunit D-2 (545 aa).

Basic residues predominate over residues 99-113 (FRGNIRNNPRTRGRT). The segment at 99–158 (FRGNIRNNPRTRGRTGRGGAVTGIGGNQPGVGVNERTKYGKGRDNRRQMGRRFGRNAPTR) is disordered. Over residues 114-127 (GRGGAVTGIGGNQP) the composition is skewed to gly residues. The segment covering 133–145 (ERTKYGKGRDNRR) has biased composition (basic and acidic residues). The segment at 287-301 (QFDLLTVNETALEPP) is RNA gate.

It belongs to the eIF-3 subunit D family. As to quaternary structure, component of the eukaryotic translation initiation factor 3 (eIF-3) complex. The eIF-3 complex interacts with pix.

The protein resides in the cytoplasm. Its function is as follows. mRNA cap-binding component of the eukaryotic translation initiation factor 3 (eIF-3) complex, which is involved in protein synthesis of a specialized repertoire of mRNAs and, together with other initiation factors, stimulates binding of mRNA and methionyl-tRNAi to the 40S ribosome. The eIF-3 complex specifically targets and initiates translation of a subset of mRNAs involved in cell proliferation. In the eIF-3 complex, eif3d specifically recognizes and binds the 7-methylguanosine cap of a subset of mRNAs. The sequence is that of Eukaryotic translation initiation factor 3 subunit D-2 from Drosophila persimilis (Fruit fly).